Here is a 245-residue protein sequence, read N- to C-terminus: DNA polymerase sliding clamp (245 aa).

It belongs to the PCNA family. Homotrimer. The subunits circularize to form a toroid; DNA passes through its center. Replication factor C (RFC) is required to load the toroid on the DNA.

In terms of biological role, sliding clamp subunit that acts as a moving platform for DNA processing. Responsible for tethering the catalytic subunit of DNA polymerase and other proteins to DNA during high-speed replication. The chain is DNA polymerase sliding clamp from Methanosarcina mazei (strain ATCC BAA-159 / DSM 3647 / Goe1 / Go1 / JCM 11833 / OCM 88) (Methanosarcina frisia).